Here is an 87-residue protein sequence, read N- to C-terminus: U3-theraphotoxin-Hhn1m (87 aa).

Positions 1 to 24 (MVNMKASMFLTFAGLVLLFVVCYA) are cleaved as a signal peptide. A propeptide spanning residues 25–52 (SESEEKEFPKEMLSSIFAVDNDFKQEER) is cleaved from the precursor. 3 cysteine pairs are disulfide-bonded: Cys54-Cys67, Cys61-Cys72, and Cys66-Cys79.

This sequence belongs to the neurotoxin 10 (Hwtx-1) family. 51 (Hntx-8) subfamily. Hntx-8 sub-subfamily. In terms of tissue distribution, expressed by the venom gland.

It is found in the secreted. In terms of biological role, ion channel inhibitor. This chain is U3-theraphotoxin-Hhn1m, found in Cyriopagopus hainanus (Chinese bird spider).